The chain runs to 60 residues: Large ribosomal subunit protein bL32 (60 aa).

Positions 1–43 (MAVQQNKKSPSKRGMHRSHDALTNPPLAIEPTTGEIHLRHHIS) are disordered.

Belongs to the bacterial ribosomal protein bL32 family.

The protein is Large ribosomal subunit protein bL32 of Nitrosomonas europaea (strain ATCC 19718 / CIP 103999 / KCTC 2705 / NBRC 14298).